The primary structure comprises 149 residues: Large ribosomal subunit protein bL9 (149 aa).

Belongs to the bacterial ribosomal protein bL9 family.

In terms of biological role, binds to the 23S rRNA. This is Large ribosomal subunit protein bL9 from Anaeromyxobacter dehalogenans (strain 2CP-C).